A 370-amino-acid polypeptide reads, in one-letter code: Protein SUPPRESSOR OF NIM1 1 (370 aa).

In terms of domain architecture, F-box spans 1-43 (MALPWELEEDILSRLPPISLVRFRTVSKHWNSLFNDKTFINNH).

In terms of tissue distribution, ubiquitous, at low levels.

Its function is as follows. Negatively regulates a plant defense signaling pathway which is independent of salicylic acid (SA) and systemic acquired resistance (SAR). Confers sensitivity to P.syringae and P.parasitica. In Arabidopsis thaliana (Mouse-ear cress), this protein is Protein SUPPRESSOR OF NIM1 1 (SON1).